Consider the following 464-residue polypeptide: MHGSGSLLACLLPPLLLLGAAPGPAGALSEEEKHVMVELHNLYRTQVSPPATNMLQMRWDEELAAFAKAYAQQCVWGHNKERGRRGENLFAITGEGLDVPLAMEEWHHEREHYNLSAISCAAGQMCGHYTQVVWAKTERIGCGSHFCEKLQGVEETNIHLLVCNYEPPGNVKGQRPYQEGTPCSQCPLGYHCKNSLCEPIRGPEEAQDLSSLVPEAPSSLATEASSSRREGIDSSLATEPPPFLVTEVSGSLATKVLSSVETKAPSSLVTEDSPSMATKTPLSLATKVPSVLATHSLLSLDKRPATLLPKSTHDPIPKSADKEASSTRMPSRIPESSLHPKISLMGTREPLPLSQEEGEAEAELAHCSEILASVFPAQEKPGELQTTLKHKGHSSSKSLSNSPSASATANAVGGRTLALQSSLPDAEGPGKHGFRSGSNASPGHVGGLLLGLLLLLPLVLAGIF.

The first 27 residues, 1 to 27 (MHGSGSLLACLLPPLLLLGAAPGPAGA), serve as a signal peptide directing secretion. In terms of domain architecture, SCP spans 37-165 (VELHNLYRTQ…TNIHLLVCNY (129 aa)). N-linked (GlcNAc...) asparagine glycosylation is present at N114. 4 disordered regions span residues 208-241 (DLSSLVPEAPSSLATEASSSRREGIDSSLATEPP), 260-281 (VETKAPSSLVTEDSPSMATKTP), 304-347 (PATL…LMGT), and 386-412 (TTLKHKGHSSSKSLSNSPSASATANAV). Basic and acidic residues predominate over residues 311–325 (STHDPIPKSADKEAS). Positions 395 to 411 (SSKSLSNSPSASATANA) are enriched in low complexity.

It belongs to the CRISP family. As to quaternary structure, interacts with PSP94/MSMB. Post-translationally, N-glycosylated.

The protein localises to the secreted. In terms of biological role, may inhibit cardiomyocyte growth. The polypeptide is Peptidase inhibitor 16 (PI16) (Bos taurus (Bovine)).